The following is a 730-amino-acid chain: DNA ligase (730 aa).

The segment at 1–23 is disordered; sequence MAGEQHAQPTSVPAEAREKHAQL. NAD(+) is bound by residues 44 to 48, 93 to 94, and Glu-124; these read DAEFD and SL. The active-site N6-AMP-lysine intermediate is the Lys-126. NAD(+)-binding residues include Arg-147, Glu-184, Lys-300, and Lys-324. 4 residues coordinate Zn(2+): Cys-418, Cys-421, Cys-437, and Cys-443. Residues 638–727 form the BRCT domain; sequence EGPRPLEGLT…PEAAAEVALP (90 aa).

This sequence belongs to the NAD-dependent DNA ligase family. LigA subfamily. Mg(2+) serves as cofactor. It depends on Mn(2+) as a cofactor.

The enzyme catalyses NAD(+) + (deoxyribonucleotide)n-3'-hydroxyl + 5'-phospho-(deoxyribonucleotide)m = (deoxyribonucleotide)n+m + AMP + beta-nicotinamide D-nucleotide.. DNA ligase that catalyzes the formation of phosphodiester linkages between 5'-phosphoryl and 3'-hydroxyl groups in double-stranded DNA using NAD as a coenzyme and as the energy source for the reaction. It is essential for DNA replication and repair of damaged DNA. This is DNA ligase from Streptomyces avermitilis (strain ATCC 31267 / DSM 46492 / JCM 5070 / NBRC 14893 / NCIMB 12804 / NRRL 8165 / MA-4680).